Here is a 641-residue protein sequence, read N- to C-terminus: 1-deoxy-D-xylulose-5-phosphate synthase (641 aa).

Thiamine diphosphate is bound by residues histidine 79 and 120 to 122 (GHS). Residue aspartate 151 coordinates Mg(2+). Residues 152 to 153 (GS), asparagine 180, tyrosine 290, and glutamate 372 contribute to the thiamine diphosphate site. Residue asparagine 180 coordinates Mg(2+).

It belongs to the transketolase family. DXPS subfamily. In terms of assembly, homodimer. It depends on Mg(2+) as a cofactor. Thiamine diphosphate is required as a cofactor.

It catalyses the reaction D-glyceraldehyde 3-phosphate + pyruvate + H(+) = 1-deoxy-D-xylulose 5-phosphate + CO2. Its pathway is metabolic intermediate biosynthesis; 1-deoxy-D-xylulose 5-phosphate biosynthesis; 1-deoxy-D-xylulose 5-phosphate from D-glyceraldehyde 3-phosphate and pyruvate: step 1/1. Its function is as follows. Catalyzes the acyloin condensation reaction between C atoms 2 and 3 of pyruvate and glyceraldehyde 3-phosphate to yield 1-deoxy-D-xylulose-5-phosphate (DXP). The sequence is that of 1-deoxy-D-xylulose-5-phosphate synthase from Rhodopseudomonas palustris (strain TIE-1).